The chain runs to 464 residues: Protein FAM90A13 (464 aa).

Disordered regions lie at residues 1 to 42, 69 to 389, and 411 to 437; these read MMAR…DPRL, VPAT…HDGA, and APSF…SEAP. Composition is skewed to basic and acidic residues over residues 74–89 and 97–114; these read GKKE…KPRG and NKDK…DPQR. The span at 180-197 shows a compositional bias: low complexity; sequence LASLSPLRKASLSSSSSL.

The protein belongs to the FAM90 family.

The protein is Protein FAM90A13 of Homo sapiens (Human).